Here is a 533-residue protein sequence, read N- to C-terminus: uncharacterized protein (533 aa).

The next 4 helical transmembrane spans lie at 1–21 (MLAF…VAFI), 135–155 (LPRF…IAAL), 193–213 (AIAA…AILA), and 472–492 (LLVN…PLVG).

The protein localises to the cell membrane. This is an uncharacterized protein from Mycobacterium bovis (strain ATCC BAA-935 / AF2122/97).